A 275-amino-acid polypeptide reads, in one-letter code: Ribosomal RNA small subunit methyltransferase A (275 aa).

S-adenosyl-L-methionine contacts are provided by N28, L30, G55, E77, D103, and N123.

Belongs to the class I-like SAM-binding methyltransferase superfamily. rRNA adenine N(6)-methyltransferase family. RsmA subfamily.

The protein resides in the cytoplasm. The catalysed reaction is adenosine(1518)/adenosine(1519) in 16S rRNA + 4 S-adenosyl-L-methionine = N(6)-dimethyladenosine(1518)/N(6)-dimethyladenosine(1519) in 16S rRNA + 4 S-adenosyl-L-homocysteine + 4 H(+). Specifically dimethylates two adjacent adenosines (A1518 and A1519) in the loop of a conserved hairpin near the 3'-end of 16S rRNA in the 30S particle. May play a critical role in biogenesis of 30S subunits. This Rhizobium etli (strain ATCC 51251 / DSM 11541 / JCM 21823 / NBRC 15573 / CFN 42) protein is Ribosomal RNA small subunit methyltransferase A.